Here is a 262-residue protein sequence, read N- to C-terminus: Hydroxyethylthiazole kinase (262 aa).

Methionine 39 is a substrate binding site. Lysine 115 and threonine 160 together coordinate ATP. Glycine 187 is a binding site for substrate.

Belongs to the Thz kinase family. Mg(2+) is required as a cofactor.

It carries out the reaction 5-(2-hydroxyethyl)-4-methylthiazole + ATP = 4-methyl-5-(2-phosphooxyethyl)-thiazole + ADP + H(+). Its pathway is cofactor biosynthesis; thiamine diphosphate biosynthesis; 4-methyl-5-(2-phosphoethyl)-thiazole from 5-(2-hydroxyethyl)-4-methylthiazole: step 1/1. In terms of biological role, catalyzes the phosphorylation of the hydroxyl group of 4-methyl-5-beta-hydroxyethylthiazole (THZ). The protein is Hydroxyethylthiazole kinase of Staphylococcus epidermidis (strain ATCC 35984 / DSM 28319 / BCRC 17069 / CCUG 31568 / BM 3577 / RP62A).